We begin with the raw amino-acid sequence, 96 residues long: Large ribosomal subunit protein uL23 (96 aa).

The protein belongs to the universal ribosomal protein uL23 family. Part of the 50S ribosomal subunit. Contacts protein L29, and trigger factor when it is bound to the ribosome.

One of the early assembly proteins it binds 23S rRNA. One of the proteins that surrounds the polypeptide exit tunnel on the outside of the ribosome. Forms the main docking site for trigger factor binding to the ribosome. This Bacillus cytotoxicus (strain DSM 22905 / CIP 110041 / 391-98 / NVH 391-98) protein is Large ribosomal subunit protein uL23.